The chain runs to 153 residues: Ubiquitin/ISG15-conjugating enzyme E2 L6 (153 aa).

One can recognise a UBC core domain in the interval 2-149 (MASMRVVKEL…AEEFTLRFGV (148 aa)). C86 acts as the Glycyl thioester intermediate in catalysis.

The protein belongs to the ubiquitin-conjugating enzyme family. In terms of assembly, interacts with RNF19A, RNF19B and RNF144B. Interacts with FLT3 (tyrosine phosphorylated). ISGylated. As to expression, present in natural killer cells (at protein level).

It carries out the reaction S-ubiquitinyl-[E1 ubiquitin-activating enzyme]-L-cysteine + [E2 ubiquitin-conjugating enzyme]-L-cysteine = [E1 ubiquitin-activating enzyme]-L-cysteine + S-ubiquitinyl-[E2 ubiquitin-conjugating enzyme]-L-cysteine.. It functions in the pathway protein modification; protein ubiquitination. Catalyzes the covalent attachment of ubiquitin or ISG15 to other proteins. Functions in the E6/E6-AP-induced ubiquitination of p53/TP53. Promotes ubiquitination and subsequent proteasomal degradation of FLT3. This is Ubiquitin/ISG15-conjugating enzyme E2 L6 (UBE2L6) from Homo sapiens (Human).